The chain runs to 488 residues: Glutamyl-tRNA(Gln) amidotransferase subunit A (488 aa).

Catalysis depends on charge relay system residues Lys-77 and Ser-152. Ser-176 (acyl-ester intermediate) is an active-site residue.

Belongs to the amidase family. GatA subfamily. As to quaternary structure, heterotrimer of A, B and C subunits.

The enzyme catalyses L-glutamyl-tRNA(Gln) + L-glutamine + ATP + H2O = L-glutaminyl-tRNA(Gln) + L-glutamate + ADP + phosphate + H(+). In terms of biological role, allows the formation of correctly charged Gln-tRNA(Gln) through the transamidation of misacylated Glu-tRNA(Gln) in organisms which lack glutaminyl-tRNA synthetase. The reaction takes place in the presence of glutamine and ATP through an activated gamma-phospho-Glu-tRNA(Gln). This Streptococcus pneumoniae (strain Hungary19A-6) protein is Glutamyl-tRNA(Gln) amidotransferase subunit A.